Here is a 185-residue protein sequence, read N- to C-terminus: Ovomucoid (185 aa).

3 consecutive Kazal-like domains span residues 1 to 63 (VEVD…ECRE), 64 to 128 (AVPM…ECRK), and 131 to 185 (AAVS…FGKC). Cystine bridges form between Cys-5/Cys-43, Cys-22/Cys-40, Cys-30/Cys-61, Cys-69/Cys-108, Cys-86/Cys-105, Cys-94/Cys-126, Cys-137/Cys-167, Cys-145/Cys-164, and Cys-153/Cys-185. A glycan (N-linked (GlcNAc...) asparagine) is linked at Asn-174.

The protein localises to the secreted. The protein is Ovomucoid of Meleagris gallopavo (Wild turkey).